The primary structure comprises 398 residues: 1-deoxy-D-xylulose 5-phosphate reductoisomerase (398 aa).

NADPH contacts are provided by T10, G11, S12, I13, G36, K37, N38, and N124. K125 serves as a coordination point for 1-deoxy-D-xylulose 5-phosphate. Residue E126 participates in NADPH binding. D150 contributes to the Mn(2+) binding site. Residues S151, E152, S186, and H209 each contribute to the 1-deoxy-D-xylulose 5-phosphate site. E152 contacts Mn(2+). G215 is a binding site for NADPH. Residues S222, N227, K228, and E231 each coordinate 1-deoxy-D-xylulose 5-phosphate. A Mn(2+)-binding site is contributed by E231.

This sequence belongs to the DXR family. As to quaternary structure, homodimer. Requires Mg(2+) as cofactor. Mn(2+) is required as a cofactor.

It catalyses the reaction 2-C-methyl-D-erythritol 4-phosphate + NADP(+) = 1-deoxy-D-xylulose 5-phosphate + NADPH + H(+). It participates in isoprenoid biosynthesis; isopentenyl diphosphate biosynthesis via DXP pathway; isopentenyl diphosphate from 1-deoxy-D-xylulose 5-phosphate: step 1/6. In terms of biological role, catalyzes the NADPH-dependent rearrangement and reduction of 1-deoxy-D-xylulose-5-phosphate (DXP) to 2-C-methyl-D-erythritol 4-phosphate (MEP). In Salmonella choleraesuis (strain SC-B67), this protein is 1-deoxy-D-xylulose 5-phosphate reductoisomerase.